The sequence spans 835 residues: Replication origin-binding protein (835 aa).

One can recognise a Helicase ATP-binding domain in the interval 54–215 (PGMSQTRPVT…SGLRGDENIH (162 aa)). 67 to 74 (APMGSGKT) lines the ATP pocket.

This sequence belongs to the herpesviridae OriBP family. As to quaternary structure, homodimer. Interacts with the major DNA-binding protein. Interacts with the helicase/primase component 52 and the polymerase accessory protein.

The protein localises to the host nucleus. Its function is as follows. Functions as a docking protein to recruit essential components of the viral replication machinery to viral DNA origins. In the presence of the major DNA-binding protein, opens dsDNA leading to a conformational change in the origin that facilitates DNA unwinding and subsequent replication. This chain is Replication origin-binding protein, found in Homo sapiens (Human).